The primary structure comprises 249 residues: Uridylate kinase (249 aa).

15–18 (KLSG) contacts ATP. An involved in allosteric activation by GTP region spans residues 23-28 (GEEGFG). Position 57 (G57) interacts with UMP. Residues G58 and R62 each coordinate ATP. UMP-binding positions include D77 and 138–145 (TGNPFFTT). T165, F171, and D174 together coordinate ATP.

Belongs to the UMP kinase family. Homohexamer.

The protein localises to the cytoplasm. The enzyme catalyses UMP + ATP = UDP + ADP. It functions in the pathway pyrimidine metabolism; CTP biosynthesis via de novo pathway; UDP from UMP (UMPK route): step 1/1. Its activity is regulated as follows. Allosterically activated by GTP. Inhibited by UTP. Catalyzes the reversible phosphorylation of UMP to UDP. The chain is Uridylate kinase from Psychromonas ingrahamii (strain DSM 17664 / CCUG 51855 / 37).